Consider the following 180-residue polypeptide: UPF0397 protein SSA_0592 (180 aa).

5 helical membrane passes run 9 to 29 (VVATGIGAALFVVIGMINIPT), 45 to 65 (LFSVIFGPIVGFLMGFIGHAI), 72 to 92 (GGLWWFWIAGSGVFGLLVGFF), 113 to 133 (LIQFGANAIAWLIGPIGDVIV), and 146 to 166 (IVAILVNSATVAVIGTVLLTA).

The protein belongs to the UPF0397 family.

The protein resides in the cell membrane. This is UPF0397 protein SSA_0592 from Streptococcus sanguinis (strain SK36).